A 402-amino-acid chain; its full sequence is Phosphoglycerate kinase (402 aa).

Residues 24–26 (DFN), Arg-40, 63–66 (HFGR), Arg-122, and Arg-155 contribute to the substrate site. ATP contacts are provided by residues Lys-206, Gly-297, Glu-328, and 358 to 361 (GGDS).

This sequence belongs to the phosphoglycerate kinase family. Monomer.

It is found in the cytoplasm. It carries out the reaction (2R)-3-phosphoglycerate + ATP = (2R)-3-phospho-glyceroyl phosphate + ADP. Its pathway is carbohydrate degradation; glycolysis; pyruvate from D-glyceraldehyde 3-phosphate: step 2/5. This Prochlorococcus marinus (strain MIT 9301) protein is Phosphoglycerate kinase.